Reading from the N-terminus, the 118-residue chain is MICOS complex subunit MIC13 (118 aa).

Over 1–7 (MVPRVWS) the chain is Mitochondrial matrix. The helical transmembrane segment at 8 to 26 (LMRFLIKGSVAGGAIYLVY) threads the bilayer. At 27-118 (DQDPLGPSDK…GWEYLKERTK (92 aa)) the chain is on the mitochondrial intermembrane side.

Belongs to the MICOS complex subunit Mic13 family. Component of the mitochondrial contact site and cristae organizing system (MICOS) complex, composed of at least MICOS10/MIC10, CHCHD3/MIC19, CHCHD6/MIC25, APOO/MIC26, MICOS13/MIC13, APOOL/MIC27 and IMMT/MIC60. The MICOS complex associates with mitochondrial outer membrane proteins SAMM50, MTX1 and MTX2 (together described as components of the mitochondrial outer membrane sorting assembly machinery (SAM) complex) and DNAJC11, mitochondrial inner membrane protein TMEM11 and with HSPA9. The MICOS and SAM complexes together with DNAJC11 are part of a large protein complex spanning both membranes termed the mitochondrial intermembrane space bridging (MIB) complex.

Its subcellular location is the mitochondrion inner membrane. Functionally, component of the MICOS complex, a large protein complex of the mitochondrial inner membrane that plays crucial roles in the maintenance of crista junctions, inner membrane architecture, and formation of contact sites to the outer membrane. Constituent of mature MICOS complex, it is required for the formation of cristae junction (CJ) and maintenance of cristae morphology. Required for the incorporation of MICOS10/MIC10 into the MICOS complex. This chain is MICOS complex subunit MIC13, found in Sus scrofa (Pig).